A 338-amino-acid chain; its full sequence is Sulfotransferase 2B1 (338 aa).

3'-phosphoadenylyl sulfate is bound at residue 67 to 72; that stretch reads KSGTNW. Residues W95 and W100 each coordinate substrate. The active-site Proton acceptor is the H122. 3'-phosphoadenylyl sulfate-binding positions include R144, S152, Y207, 241 to 246, and 271 to 273; these read SAFAAM and RKG. Residues 301–338 are disordered; sequence VQRFPWDTSEEDSSPDGQPDPEPSPSPASDDPNPGSSQ. Over residues 327–338 the composition is skewed to low complexity; it reads PASDDPNPGSSQ.

The protein belongs to the sulfotransferase 1 family. As to expression, expressed at high levels in epididymis, intestine and uterus, and low levels in brain and hypothalamus. Isoform 2 is most prominent in the brain and spinal cord, with modest expression in the lung, skin and spleen. Isoform 1 is most prominently expressed in skin and small intestine, with modest expression in muscle and prostate.

The protein resides in the cytoplasm. Its subcellular location is the cytosol. The protein localises to the microsome. It is found in the nucleus. The catalysed reaction is an alcohol + 3'-phosphoadenylyl sulfate = an alkyl sulfate + adenosine 3',5'-bisphosphate + H(+). It carries out the reaction pregnenolone + 3'-phosphoadenylyl sulfate = pregnenolone sulfate + adenosine 3',5'-bisphosphate + H(+). The enzyme catalyses 3beta-hydroxyandrost-5-en-17-one + 3'-phosphoadenylyl sulfate = dehydroepiandrosterone 3-sulfate + adenosine 3',5'-bisphosphate + H(+). It catalyses the reaction cholesterol + 3'-phosphoadenylyl sulfate = cholesterol sulfate + adenosine 3',5'-bisphosphate + H(+). Its function is as follows. Sulfotransferase that utilizes 3'-phospho-5'-adenylyl sulfate (PAPS) as sulfonate donor to catalyze the sulfate conjugation. Preferentially sulfonates cholesterol. Catalyzes sulfation of the 3beta-hydroxyl groups of steroids, such as, pregnenolone and dehydroepiandrosterone (DHEA). Cholesterol sulfation is approximately 10-fold higher than for pregnenolone and 20-fold higher than for DHEA. Plays a role in epidermal cholesterol metabolism and in the regulation of epidermal proliferation and differentiation. Functionally, strongly sulfonates pregnenolone, however is capable to sulfonate cholesterol with a high degree of efficiency. DHEA is a relatively poor substrate. The sequence is that of Sulfotransferase 2B1 (Sult2b1) from Mus musculus (Mouse).